Reading from the N-terminus, the 159-residue chain is Vasotocin-neurophysin VT (159 aa).

The signal sequence occupies residues 1-17; that stretch reads TAPVPACFLCLLALSSA. Cys18 and Cys23 are joined by a disulfide. A Glycine amide modification is found at Gly26. 7 disulfide bridges follow: Cys39–Cys83, Cys42–Cys56, Cys50–Cys73, Cys57–Cys63, Cys90–Cys102, Cys96–Cys114, and Cys103–Cys108. Asn129 carries N-linked (GlcNAc...) asparagine glycosylation.

It belongs to the vasopressin/oxytocin family. In terms of processing, seven disulfide bonds are present in neurophysin.

It localises to the secreted. Its function is as follows. Vasotocin is an antidiuretic hormone. This Bufo japonicus (Japanese common toad) protein is Vasotocin-neurophysin VT.